We begin with the raw amino-acid sequence, 393 residues long: Stearoyl-[acyl-carrier-protein] 9-desaturase, chloroplastic (393 aa).

The N-terminal 31 residues, 1-31, are a transit peptide targeting the chloroplast; that stretch reads MASMVAFRPEAFLCFSPPKTTRSTRSPRISM. Residues Glu-135, Glu-173, His-176, Glu-226, Glu-259, and His-262 each contribute to the Fe cation site.

Belongs to the fatty acid desaturase type 2 family. In terms of assembly, homodimer. Fe(2+) serves as cofactor.

It localises to the plastid. The protein resides in the chloroplast. It catalyses the reaction octadecanoyl-[ACP] + 2 reduced [2Fe-2S]-[ferredoxin] + O2 + 2 H(+) = (9Z)-octadecenoyl-[ACP] + 2 oxidized [2Fe-2S]-[ferredoxin] + 2 H2O. Its pathway is lipid metabolism; fatty acid metabolism. Converts stearoyl-ACP to oleoyl-ACP by introduction of a cis double bond between carbons 9 and 10 of the acyl chain. The sequence is that of Stearoyl-[acyl-carrier-protein] 9-desaturase, chloroplastic from Elaeis guineensis var. tenera (Oil palm).